The primary structure comprises 445 residues: Glutamate-1-semialdehyde 2,1-aminomutase (445 aa).

Lys263 bears the N6-(pyridoxal phosphate)lysine mark.

The protein belongs to the class-III pyridoxal-phosphate-dependent aminotransferase family. HemL subfamily. Pyridoxal 5'-phosphate is required as a cofactor.

The protein resides in the cytoplasm. It catalyses the reaction (S)-4-amino-5-oxopentanoate = 5-aminolevulinate. The protein operates within porphyrin-containing compound metabolism; protoporphyrin-IX biosynthesis; 5-aminolevulinate from L-glutamyl-tRNA(Glu): step 2/2. This Halorubrum lacusprofundi (strain ATCC 49239 / DSM 5036 / JCM 8891 / ACAM 34) protein is Glutamate-1-semialdehyde 2,1-aminomutase.